Here is a 1406-residue protein sequence, read N- to C-terminus: DNA-directed RNA polymerase subunit beta' (1406 aa).

Residues cysteine 72, cysteine 74, cysteine 87, and cysteine 90 each contribute to the Zn(2+) site. Mg(2+) is bound by residues aspartate 462, aspartate 464, and aspartate 466. Cysteine 816, cysteine 891, cysteine 898, and cysteine 901 together coordinate Zn(2+).

The protein belongs to the RNA polymerase beta' chain family. The RNAP catalytic core consists of 2 alpha, 1 beta, 1 beta' and 1 omega subunit. When a sigma factor is associated with the core the holoenzyme is formed, which can initiate transcription. It depends on Mg(2+) as a cofactor. Requires Zn(2+) as cofactor.

It carries out the reaction RNA(n) + a ribonucleoside 5'-triphosphate = RNA(n+1) + diphosphate. In terms of biological role, DNA-dependent RNA polymerase catalyzes the transcription of DNA into RNA using the four ribonucleoside triphosphates as substrates. This chain is DNA-directed RNA polymerase subunit beta', found in Psychrobacter arcticus (strain DSM 17307 / VKM B-2377 / 273-4).